We begin with the raw amino-acid sequence, 130 residues long: Small ribosomal subunit protein uS9 (130 aa).

Belongs to the universal ribosomal protein uS9 family.

The sequence is that of Small ribosomal subunit protein uS9 from Stutzerimonas stutzeri (strain A1501) (Pseudomonas stutzeri).